The primary structure comprises 655 residues: Alpha-L-iduronidase (655 aa).

The N-terminal stretch at 1-25 is a signal peptide; that stretch reads MRPPGPRAPGLALLAALLAAPRALA. Residues P53, L55, and H57 each contribute to the alpha-D-mannopyranose site. Alpha-L-iduronate is bound at residue H90. N109 carries an N-linked (GlcNAc...) asparagine glycan. Residues N180 and E181 each coordinate alpha-L-iduronate. Catalysis depends on E181, which acts as the Proton donor. N189 and N242 each carry an N-linked (GlcNAc...) asparagine glycan. 3 residues coordinate alpha-L-iduronate: K263, E298, and G304. Residue E298 is the Nucleophile of the active site. An alpha-D-mannopyranose-binding site is contributed by W305. N-linked (GlcNAc...) asparagine glycosylation occurs at N335. Positions 348 and 362 each coordinate alpha-L-iduronate. N371 and N414 each carry an N-linked (GlcNAc...) asparagine glycan. Cysteines 540 and 576 form a disulfide.

Belongs to the glycosyl hydrolase 39 family. As to quaternary structure, monomer. A smaller 63 kDa protein probably arises from IDUA protein by proteolytic cleavage. Post-translationally, N-glycosylation contributes to substrate binding and is required for full enzymatic activity. Detected in testis (at protein level). Expressed ubiquitously.

It localises to the lysosome. The enzyme catalyses Hydrolysis of unsulfated alpha-L-iduronosidic linkages in dermatan sulfate.. The sequence is that of Alpha-L-iduronidase (IDUA) from Canis lupus familiaris (Dog).